Consider the following 510-residue polypeptide: NADH-quinone oxidoreductase subunit N (510 aa).

Transmembrane regions (helical) follow at residues 14–34 (LLPE…DLFA), 42–62 (VIGW…IINM), 84–104 (AFKL…LSYL), 113–133 (GEYY…ASSA), 135–155 (LITL…LVGL), 170–190 (VVSG…VYGL), 208–228 (MAGY…GLAF), 247–267 (PTPV…ALIF), 286–306 (FFFE…MIIG), 323–343 (SGIA…SLFF), 346–366 (VIFY…VIMV), 390–410 (AIAM…VGFF), 426–446 (WLAA…FGII), and 466–486 (IWTF…FPGL).

It belongs to the complex I subunit 2 family. NDH-1 is composed of 14 different subunits. Subunits NuoA, H, J, K, L, M, N constitute the membrane sector of the complex.

It is found in the cell membrane. It carries out the reaction a quinone + NADH + 5 H(+)(in) = a quinol + NAD(+) + 4 H(+)(out). In terms of biological role, NDH-1 shuttles electrons from NADH, via FMN and iron-sulfur (Fe-S) centers, to quinones in the respiratory chain. The immediate electron acceptor for the enzyme in this species is believed to be a menaquinone. Couples the redox reaction to proton translocation (for every two electrons transferred, four hydrogen ions are translocated across the cytoplasmic membrane), and thus conserves the redox energy in a proton gradient. This chain is NADH-quinone oxidoreductase subunit N, found in Brevibacillus brevis (strain 47 / JCM 6285 / NBRC 100599).